The primary structure comprises 48 residues: Hemoglobin subunit beta-B (48 aa).

Residues 2–48 (EWTDAERGAILSLWGKIDPDELGPALLARXXLVYXXTQRYFASFGDL) form the Globin domain.

It belongs to the globin family. As to quaternary structure, heterotetramer of two alpha chains and two beta chains. In terms of tissue distribution, red blood cells.

Its function is as follows. Involved in oxygen transport from gills to the various peripheral tissues. The polypeptide is Hemoglobin subunit beta-B (Catostomus clarkii (Desert sucker)).